The chain runs to 202 residues: dITP/XTP pyrophosphatase (202 aa).

Residue 7-12 participates in substrate binding; that stretch reads TTNEGK. 2 residues coordinate Mg(2+): E37 and D66. D66 functions as the Proton acceptor in the catalytic mechanism. Substrate contacts are provided by residues S67, 155-158, K178, and 183-184; these read FGYD and HR.

This sequence belongs to the HAM1 NTPase family. As to quaternary structure, homodimer. Requires Mg(2+) as cofactor.

The enzyme catalyses XTP + H2O = XMP + diphosphate + H(+). The catalysed reaction is dITP + H2O = dIMP + diphosphate + H(+). It carries out the reaction ITP + H2O = IMP + diphosphate + H(+). Pyrophosphatase that catalyzes the hydrolysis of nucleoside triphosphates to their monophosphate derivatives, with a high preference for the non-canonical purine nucleotides XTP (xanthosine triphosphate), dITP (deoxyinosine triphosphate) and ITP. Seems to function as a house-cleaning enzyme that removes non-canonical purine nucleotides from the nucleotide pool, thus preventing their incorporation into DNA/RNA and avoiding chromosomal lesions. In Aquifex aeolicus (strain VF5), this protein is dITP/XTP pyrophosphatase.